A 368-amino-acid chain; its full sequence is MPKPGELTFVAPRGAKKPPRHIADLTPAERKEAVAATGEKPFRAQQLSQHYFARYAHDPAEWTNIPAGSREKLAEALFPDLMSVMRHISCDDDTTRKTLWKLHDGTLVESVLMRYPDRVTMCISSQAGCGMNCPFCATGQAGLDRNLSTAEIVHQIVDGMRALRDGEVPGGPARLSNIVFMGMGEPLANYNRVVGAIRRLTDPEPDGLGLSQRGITVSTVGLVPAMLRFADEGFKCRLAVSLHAPDDELRDTLVPVNTRWNVREVLDAAWEYADKSGRRISIEYALIRDINDQAWRGDRLGRLLKGKRVHVNLIPLNPTPGSKWTASRPEDEKAFVEAVAAHGVPVTVRDTRGQEIDGACGQLAAAER.

The active-site Proton acceptor is glutamate 109. Residues 115-355 (YPDRVTMCIS…VTVRDTRGQE (241 aa)) enclose the Radical SAM core domain. Cysteine 122 and cysteine 360 are joined by a disulfide. Residues cysteine 129, cysteine 133, and cysteine 136 each contribute to the [4Fe-4S] cluster site. S-adenosyl-L-methionine is bound by residues 184-185 (GE), serine 218, 241-243 (SLH), and asparagine 317. Cysteine 360 functions as the S-methylcysteine intermediate in the catalytic mechanism.

This sequence belongs to the radical SAM superfamily. RlmN family. It depends on [4Fe-4S] cluster as a cofactor.

It is found in the cytoplasm. It catalyses the reaction adenosine(2503) in 23S rRNA + 2 reduced [2Fe-2S]-[ferredoxin] + 2 S-adenosyl-L-methionine = 2-methyladenosine(2503) in 23S rRNA + 5'-deoxyadenosine + L-methionine + 2 oxidized [2Fe-2S]-[ferredoxin] + S-adenosyl-L-homocysteine. It carries out the reaction adenosine(37) in tRNA + 2 reduced [2Fe-2S]-[ferredoxin] + 2 S-adenosyl-L-methionine = 2-methyladenosine(37) in tRNA + 5'-deoxyadenosine + L-methionine + 2 oxidized [2Fe-2S]-[ferredoxin] + S-adenosyl-L-homocysteine. Specifically methylates position 2 of adenine 2503 in 23S rRNA and position 2 of adenine 37 in tRNAs. The polypeptide is Probable dual-specificity RNA methyltransferase RlmN (Streptomyces griseus subsp. griseus (strain JCM 4626 / CBS 651.72 / NBRC 13350 / KCC S-0626 / ISP 5235)).